The sequence spans 1282 residues: Clustered mitochondria protein homolog (1282 aa).

Residues 1 to 43 are disordered; the sequence is MEQNNGTTEHPKEVLDQTNPSNEVTGVPNGNHAEGEGDQNAGE. Positions 341-585 constitute a Clu domain; sequence DITRPQENYL…RITPLDVLWY (245 aa). Composition is skewed to basic and acidic residues over residues 631 to 641 and 653 to 669; these read EAEEKAEESKP and ESEK…RVDI. Disordered regions lie at residues 631–669 and 892–936; these read EAEE…RVDI and RSQL…PAPA. The span at 924–936 shows a compositional bias: low complexity; it reads QASPRPAQSPAPA. One copy of the TPR repeat lies at 1003–1036; sequence AKLYHQLSMLYYQSDDKDAAVELARKAVIVTERT. The segment at 1202–1282 is disordered; that stretch reads ANLPTRLGTK…SKQSTVKPSS (81 aa). The segment covering 1212 to 1223 has biased composition (polar residues); sequence PQPQVGQTTSEM. Residues 1257 to 1272 are compositionally biased toward basic residues; it reads TKQKKRAAARNPKLRG. Over residues 1273-1282 the composition is skewed to polar residues; that stretch reads SKQSTVKPSS.

It belongs to the CLU family. In terms of assembly, may associate with the eukaryotic translation initiation factor 3 (eIF-3) complex.

Its subcellular location is the cytoplasm. In terms of biological role, mRNA-binding protein involved in proper cytoplasmic distribution of mitochondria. The chain is Clustered mitochondria protein homolog from Coccidioides immitis (strain RS) (Valley fever fungus).